Reading from the N-terminus, the 102-residue chain is Large ribosomal subunit protein bL21 (102 aa).

This sequence belongs to the bacterial ribosomal protein bL21 family. Part of the 50S ribosomal subunit. Contacts protein L20.

Functionally, this protein binds to 23S rRNA in the presence of protein L20. This is Large ribosomal subunit protein bL21 from Lactiplantibacillus plantarum (strain ATCC BAA-793 / NCIMB 8826 / WCFS1) (Lactobacillus plantarum).